Consider the following 666-residue polypeptide: Translation factor guf1, mitochondrial (666 aa).

Residues 1–43 (MRGCLQLARWLRAAPKCPAASLLKPPSGLANPARFFTTSTACW) constitute a mitochondrion transit peptide. Residues 68 to 248 (DRYRNFCIVA…TVVEKIPAPV (181 aa)) form the tr-type G domain. Residues 77 to 84 (AHVDHGKS), 141 to 145 (DTPGH), and 195 to 198 (NKVD) contribute to the GTP site.

It belongs to the TRAFAC class translation factor GTPase superfamily. Classic translation factor GTPase family. LepA subfamily.

The protein resides in the mitochondrion inner membrane. It catalyses the reaction GTP + H2O = GDP + phosphate + H(+). Functionally, promotes mitochondrial protein synthesis. May act as a fidelity factor of the translation reaction, by catalyzing a one-codon backward translocation of tRNAs on improperly translocated ribosomes. Binds to mitochondrial ribosomes in a GTP-dependent manner. The protein is Translation factor guf1, mitochondrial (guf1) of Aspergillus niger (strain ATCC MYA-4892 / CBS 513.88 / FGSC A1513).